The primary structure comprises 462 residues: L-seryl-tRNA(Sec) selenium transferase (462 aa).

K292 is subject to N6-(pyridoxal phosphate)lysine.

This sequence belongs to the SelA family. It depends on pyridoxal 5'-phosphate as a cofactor.

The protein resides in the cytoplasm. It catalyses the reaction L-seryl-tRNA(Sec) + selenophosphate + H(+) = L-selenocysteinyl-tRNA(Sec) + phosphate. Its pathway is aminoacyl-tRNA biosynthesis; selenocysteinyl-tRNA(Sec) biosynthesis; selenocysteinyl-tRNA(Sec) from L-seryl-tRNA(Sec) (bacterial route): step 1/1. Functionally, converts seryl-tRNA(Sec) to selenocysteinyl-tRNA(Sec) required for selenoprotein biosynthesis. The protein is L-seryl-tRNA(Sec) selenium transferase of Geotalea daltonii (strain DSM 22248 / JCM 15807 / FRC-32) (Geobacter daltonii).